The following is a 434-amino-acid chain: Beta-enolase (434 aa).

Ser-2 carries the N-acetylserine modification. Substrate-binding residues include His-158 and Glu-167. Glu-210 (proton donor) is an active-site residue. Asp-245, Glu-293, and Asp-318 together coordinate Mg(2+). Substrate is bound by residues Glu-293 and Asp-318. The active-site Proton acceptor is the Lys-343. Substrate-binding positions include 370–373 and Lys-394; that span reads SHRS.

This sequence belongs to the enolase family. In terms of assembly, homodimer. Interacts with PNKD. Mg(2+) serves as cofactor.

It is found in the cytoplasm. It carries out the reaction (2R)-2-phosphoglycerate = phosphoenolpyruvate + H2O. It functions in the pathway carbohydrate degradation; glycolysis; pyruvate from D-glyceraldehyde 3-phosphate: step 4/5. Functionally, glycolytic enzyme that catalyzes the conversion of 2-phosphoglycerate to phosphoenolpyruvate. The chain is Beta-enolase (ENO3) from Gallus gallus (Chicken).